The following is a 27-amino-acid chain: Potassium channel toxin alpha-KTx 9.11 (27 aa).

3 disulfides stabilise this stretch: Cys3–Cys19, Cys6–Cys23, and Cys10–Cys25.

The protein belongs to the short scorpion toxin superfamily. Potassium channel inhibitor family. Alpha-KTx 09 subfamily. As to expression, expressed by the venom gland.

The protein localises to the secreted. In terms of biological role, may play a role in blocking voltage-gated potassium channels Kv1.2/KCNA2, Kv1.3/KCNA3 and Kv1.6/KCNA6 to a lesser extent. The sequence is that of Potassium channel toxin alpha-KTx 9.11 from Mesobuthus gibbosus (Mediterranean checkered scorpion).